The chain runs to 270 residues: 3-phenylpropionate-dihydrodiol/cinnamic acid-dihydrodiol dehydrogenase (270 aa).

10-34 contributes to the NAD(+) binding site; it reads FITGGGSGLGLALVERFIEEGAQVA. Residue S143 coordinates substrate. Y156 acts as the Proton acceptor in catalysis.

The protein belongs to the short-chain dehydrogenases/reductases (SDR) family.

It catalyses the reaction 3-(cis-5,6-dihydroxycyclohexa-1,3-dien-1-yl)propanoate + NAD(+) = 3-(2,3-dihydroxyphenyl)propanoate + NADH + H(+). The catalysed reaction is (2E)-3-(cis-5,6-dihydroxycyclohexa-1,3-dien-1-yl)prop-2-enoate + NAD(+) = (2E)-3-(2,3-dihydroxyphenyl)prop-2-enoate + NADH + H(+). Its pathway is aromatic compound metabolism; 3-phenylpropanoate degradation. Its function is as follows. Converts 3-phenylpropionate-dihydrodiol (PP-dihydrodiol) and cinnamic acid-dihydrodiol (CI-dihydrodiol) into 3-(2,3-dihydroxylphenyl)propanoic acid (DHPP) and 2,3-dihydroxicinnamic acid (DHCI), respectively. This Shigella flexneri serotype 5b (strain 8401) protein is 3-phenylpropionate-dihydrodiol/cinnamic acid-dihydrodiol dehydrogenase.